The chain runs to 201 residues: Phosphoprotein (201 aa).

Disordered stretches follow at residues 1 to 70 and 176 to 201; these read MATR…EQLS and PSHPAPPRIYPQLPSAPTTDEWDIIP. Short sequence motifs (nuclear localization signal) lie at residues 29–36 and 181–193; these read PRPRKVPR and PPRIYPQLPSAPT.

As to quaternary structure, homomultimer; only active in its oligomeric state. Interacts with nucleoprotein/N. Interacts with matrix/M protein. Interacts with host TBK1. Interacts with polymerase L. Interacts with host HMGB1; this interaction is required to stabilize RNP on chromosomes. In terms of processing, phosphorylated by host PKC epsilon and casein kinase II.

The protein resides in the host nucleus. It localises to the host cytoplasm. Essential component of the RNA polymerase transcription and replication complex. Acts as a scaffold which brings L in close proximity to the N-RNA complex. Plays a role in the segregation of the viral genome in host daughter cells during mitosis by interacting with host HMGB1, a host chromatin-remodeling DNA architectural protein, thereby stabilizing RNP on chromosomes. Interacts with host TBK1 and thus interferes with activation of cellular antiviral state. Inhibits cellular histone acetyltransferase activities. The protein is Phosphoprotein (P/X) of Bos taurus (Bovine).